A 353-amino-acid polypeptide reads, in one-letter code: Melatonin receptor type 1A (353 aa).

The Extracellular segment spans residues 1-32 (MKGNVSELLNATQQAPGGGEGGRPRPSWLAST). N-linked (GlcNAc...) asparagine glycosylation is found at Asn4 and Asn10. A helical transmembrane segment spans residues 33-53 (LAFILIFTIVVDILGNLLVIL). At 54-66 (SVYRNKKLRNSGN) the chain is on the cytoplasmic side. Residues 67–87 (IFVVSLAVADLVVAVYPYPLV) form a helical membrane-spanning segment. At 88–105 (LTSILNNGWNLGYLHCQV) the chain is on the extracellular side. Cys103 and Cys180 are oxidised to a cystine. The chain crosses the membrane as a helical span at residues 106 to 126 (SAFLMGLSVIGSIFNITGIAM). Over 127–145 (NRYCYICHSLKYDKIYSNK) the chain is Cytoplasmic. A helical transmembrane segment spans residues 146 to 166 (NSLCYVFLIWMLTLIAIMPNL). Over 167–190 (QTGTLQYDPRIYSCTFTQSVSSAY) the chain is Extracellular. Residues 191-211 (TIAVVVFHFIVPMIIVIFCYL) traverse the membrane as a helical segment. At 212–243 (RIWVLVLQVRRRVKPDNKPKLKPQDFRNFVTM) the chain is on the cytoplasmic side. Residues 244–264 (FVVFVLFAICWAPLNLIGLIV) form a helical membrane-spanning segment. Over 265–277 (ASDPATMVPRIPE) the chain is Extracellular. A helical membrane pass occupies residues 278-298 (WLFVASYYLAYFNSCLNAIIY). The Cytoplasmic portion of the chain corresponds to 299 to 353 (GLLNQNFRKEYKKIIVSLCTAKMFFVESSNEEADKIKCKPSPLIPNNNLIKVDSV).

This sequence belongs to the G-protein coupled receptor 1 family.

The protein resides in the cell membrane. Its function is as follows. High affinity receptor for melatonin. Likely to mediate the reproductive and circadian actions of melatonin. The activity of this receptor is mediated by pertussis toxin sensitive G proteins that inhibit adenylate cyclase activity. Possibly involved in sleep induction, by melatonin activation of the potassium channel KCNMA1/BK and the dissociation of G-beta and G-gamma subunits, thereby decreasing synaptic transmission. This chain is Melatonin receptor type 1A (Mtnr1a), found in Mus musculus (Mouse).